A 678-amino-acid chain; its full sequence is Probable metal-nicotianamine transporter YSL6 (678 aa).

14 helical membrane-spanning segments follow: residues 41–61 (VTVR…LITH), 65–85 (LTVG…YFLV), 113–133 (CVVA…MLAM), 158–178 (LGWM…SLVA), 226–246 (ISFF…SCGF), 279–299 (IVNC…WPYI), 324–344 (VFIS…KIIY), 394–414 (LAGS…PMIF), 419–439 (WYLV…NSYG), 467–487 (GGVI…STAA), 512–532 (IGTT…WTAF), 561–581 (SALP…AILI), 606–626 (FYIG…LFVW), and 641–661 (IASG…ILSI).

This sequence belongs to the YSL (TC 2.A.67.2) family. As to expression, expressed in roots and leaves.

Its subcellular location is the membrane. May be involved in the transport of nicotianamine-chelated metals. The protein is Probable metal-nicotianamine transporter YSL6 (YSL6) of Oryza sativa subsp. japonica (Rice).